The chain runs to 485 residues: Adenosylhomocysteinase (485 aa).

Substrate-binding residues include Thr64, Asp139, and Glu205. 206 to 208 lines the NAD(+) pocket; it reads TTT. The substrate site is built by Lys235 and Asp239. NAD(+) contacts are provided by residues Asn240, 269 to 274, Glu292, Asn327, 348 to 350, and Asn397; these read GYGDVG and IGH.

Belongs to the adenosylhomocysteinase family. NAD(+) is required as a cofactor.

The catalysed reaction is S-adenosyl-L-homocysteine + H2O = L-homocysteine + adenosine. The protein operates within amino-acid biosynthesis; L-homocysteine biosynthesis; L-homocysteine from S-adenosyl-L-homocysteine: step 1/1. Its function is as follows. Adenosylhomocysteine is a competitive inhibitor of S-adenosyl-L-methionine-dependent methyl transferase reactions; therefore adenosylhomocysteinase may play a key role in the control of methylations via regulation of the intracellular concentration of adenosylhomocysteine. The sequence is that of Adenosylhomocysteinase (SAHH) from Nicotiana sylvestris (Wood tobacco).